Reading from the N-terminus, the 167-residue chain is Lipoprotein signal peptidase (167 aa).

Transmembrane regions (helical) follow at residues 67–87 (WILVALTLFAILLLSIWLWRA) and 91–111 (LVALALGCIIGGALGNAIDRI). Catalysis depends on residues Asp-118 and Asp-136. Residues 127-147 (FSWYVFNLADAAIVAGVALLI) traverse the membrane as a helical segment.

This sequence belongs to the peptidase A8 family.

Its subcellular location is the cell inner membrane. It carries out the reaction Release of signal peptides from bacterial membrane prolipoproteins. Hydrolyzes -Xaa-Yaa-Zaa-|-(S,diacylglyceryl)Cys-, in which Xaa is hydrophobic (preferably Leu), and Yaa (Ala or Ser) and Zaa (Gly or Ala) have small, neutral side chains.. It participates in protein modification; lipoprotein biosynthesis (signal peptide cleavage). Its function is as follows. This protein specifically catalyzes the removal of signal peptides from prolipoproteins. This chain is Lipoprotein signal peptidase, found in Beijerinckia indica subsp. indica (strain ATCC 9039 / DSM 1715 / NCIMB 8712).